Reading from the N-terminus, the 695-residue chain is MILKYNSSYRFYLSSSFLQAMEVDCRRYYVRLLQSCSSRNRETLWRQTNGLLLKKGFLSSIVIVANHLLQMYSRSGKMGIARNLFDEMPDRNYFSWNTMIEGYMNSGEKGTSLRFFDMMPERDGYSWNVVVSGFAKAGELSVARRLFNAMPEKDVVTLNSLLHGYILNGYAEEALRLFKELNFSADAITLTTVLKACAELEALKCGKQIHAQILIGGVECDSKMNSSLVNVYAKCGDLRMASYMLEQIREPDDHSLSALISGYANCGRVNESRGLFDRKSNRCVILWNSMISGYIANNMKMEALVLFNEMRNETREDSRTLAAVINACIGLGFLETGKQMHCHACKFGLIDDIVVASTLLDMYSKCGSPMEACKLFSEVESYDTILLNSMIKVYFSCGRIDDAKRVFERIENKSLISWNSMTNGFSQNGCTVETLEYFHQMHKLDLPTDEVSLSSVISACASISSLELGEQVFARATIVGLDSDQVVSSSLIDLYCKCGFVEHGRRVFDTMVKSDEVPWNSMISGYATNGQGFEAIDLFKKMSVAGIRPTQITFMVVLTACNYCGLVEEGRKLFESMKVDHGFVPDKEHFSCMVDLLARAGYVEEAINLVEEMPFDVDGSMWSSILRGCVANGYKAMGKKAAEKIIELEPENSVAYVQLSAIFATSGDWESSALVRKLMRENNVTKNPGSSWTDC.

Residues 1–64 constitute a mitochondrion transit peptide; it reads MILKYNSSYR…KGFLSSIVIV (64 aa). 17 PPR repeats span residues 61-91, 92-122, 123-157, 159-184, 186-220, 221-251, 252-282, 283-313, 317-351, 352-382, 383-417, 418-448, 449-483, 484-514, 515-549, 550-585, and 586-616; these read IVIVANHLLQMYSRSGKMGIARNLFDEMPDR, NYFSWNTMIEGYMNSGEKGTSLRFFDMMPER, DGYSWNVVVSGFAKAGELSVARRLFNAMPEKDVVT, NSLLHGYILNGYAEEALRLFKELNFS, DAITLTTVLKACAELEALKCGKQIHAQILIGGVEC, DSKMNSSLVNVYAKCGDLRMASYMLEQIREP, DDHSLSALISGYANCGRVNESRGLFDRKSNR, CVILWNSMISGYIANNMKMEALVLFNEMRNE, DSRTLAAVINACIGLGFLETGKQMHCHACKFGLID, DIVVASTLLDMYSKCGSPMEACKLFSEVESY, DTILLNSMIKVYFSCGRIDDAKRVFERIENKSLIS, WNSMTNGFSQNGCTVETLEYFHQMHKLDLPT, DEVSLSSVISACASISSLELGEQVFARATIVGLDS, DQVVSSSLIDLYCKCGFVEHGRRVFDTMVKS, DEVPWNSMISGYATNGQGFEAIDLFKKMSVAGIRP, TQITFMVVLTACNYCGLVEEGRKLFESMKVDHGFVP, and DKEHFSCMVDLLARAGYVEEAINLVEEMPFD. The interval 621 to 695 is type E motif; degenerate; sequence MWSSILRGCV…KNPGSSWTDC (75 aa).

It belongs to the PPR family. PCMP-E subfamily.

It localises to the mitochondrion. In Arabidopsis thaliana (Mouse-ear cress), this protein is Putative pentatricopeptide repeat-containing protein At1g77010, mitochondrial (PCMP-E5).